The primary structure comprises 468 residues: Tissue alpha-L-fucosidase (468 aa).

The first 29 residues, 1–29, serve as a signal peptide directing secretion; it reads MRAPGERWRPAGAALWLLLLLLLLGATES. Position 172 is a phosphothreonine (T172). N-linked (GlcNAc...) asparagine glycosylation is found at N243, N270, and N384.

Belongs to the glycosyl hydrolase 29 family. As to quaternary structure, homotetramer.

The protein resides in the lysosome. It carries out the reaction an alpha-L-fucoside + H2O = L-fucose + an alcohol. The enzyme catalyses a neolactoside IV(2)-alpha-Fuc-nLc4Cer(d18:1(4E)) + H2O = a neolactoside nLc4Cer(d18:1(4E)) + L-fucose. It catalyses the reaction a neolactoside IV(2)-alpha-Fuc-nLc4Cer(d18:0) + H2O = a neolactoside nLc4Cer(d18:0) + L-fucose. Functionally, alpha-L-fucosidase is responsible for hydrolyzing the alpha-1,6-linked fucose joined to the reducing-end N-acetylglucosamine of the carbohydrate moieties of glycoproteins. This Macaca fascicularis (Crab-eating macaque) protein is Tissue alpha-L-fucosidase (FUCA1).